Consider the following 274-residue polypeptide: Large ribosomal subunit protein uL2 (274 aa).

The interval 223 to 256 (VVMNPVDHPHGGGEGKTGEGRHPVDPWGNLTKGY) is disordered. The segment covering 229-246 (DHPHGGGEGKTGEGRHPV) has biased composition (basic and acidic residues).

It belongs to the universal ribosomal protein uL2 family. As to quaternary structure, part of the 50S ribosomal subunit. Forms a bridge to the 30S subunit in the 70S ribosome.

Functionally, one of the primary rRNA binding proteins. Required for association of the 30S and 50S subunits to form the 70S ribosome, for tRNA binding and peptide bond formation. It has been suggested to have peptidyltransferase activity; this is somewhat controversial. Makes several contacts with the 16S rRNA in the 70S ribosome. In Variovorax paradoxus (strain S110), this protein is Large ribosomal subunit protein uL2.